Consider the following 465-residue polypeptide: Light-independent protochlorophyllide reductase subunit N (465 aa).

Residues C22, C47, and C107 each coordinate [4Fe-4S] cluster.

Belongs to the BchN/ChlN family. Protochlorophyllide reductase is composed of three subunits; ChlL, ChlN and ChlB. Forms a heterotetramer of two ChlB and two ChlN subunits. [4Fe-4S] cluster is required as a cofactor.

The protein resides in the plastid. Its subcellular location is the chloroplast. It catalyses the reaction chlorophyllide a + oxidized 2[4Fe-4S]-[ferredoxin] + 2 ADP + 2 phosphate = protochlorophyllide a + reduced 2[4Fe-4S]-[ferredoxin] + 2 ATP + 2 H2O. Its pathway is porphyrin-containing compound metabolism; chlorophyll biosynthesis (light-independent). Functionally, component of the dark-operative protochlorophyllide reductase (DPOR) that uses Mg-ATP and reduced ferredoxin to reduce ring D of protochlorophyllide (Pchlide) to form chlorophyllide a (Chlide). This reaction is light-independent. The NB-protein (ChlN-ChlB) is the catalytic component of the complex. In Marchantia polymorpha (Common liverwort), this protein is Light-independent protochlorophyllide reductase subunit N.